A 296-amino-acid polypeptide reads, in one-letter code: ATP synthase gamma chain (296 aa).

This sequence belongs to the ATPase gamma chain family. As to quaternary structure, F-type ATPases have 2 components, CF(1) - the catalytic core - and CF(0) - the membrane proton channel. CF(1) has five subunits: alpha(3), beta(3), gamma(1), delta(1), epsilon(1). CF(0) has three main subunits: a, b and c.

Its subcellular location is the cell inner membrane. Its function is as follows. Produces ATP from ADP in the presence of a proton gradient across the membrane. The gamma chain is believed to be important in regulating ATPase activity and the flow of protons through the CF(0) complex. The protein is ATP synthase gamma chain of Rhodopirellula baltica (strain DSM 10527 / NCIMB 13988 / SH1).